Reading from the N-terminus, the 63-residue chain is Ferredoxin (63 aa).

Residues 2 to 29 (KVTVDQDLCIACGTCIDLCPSVFDWDDE) enclose the 4Fe-4S ferredoxin-type domain. Positions 10, 13, 16, and 55 each coordinate [4Fe-4S] cluster.

The cofactor is [4Fe-4S] cluster.

Functionally, ferredoxins are iron-sulfur proteins that transfer electrons in a wide variety of metabolic reactions. In Moorella thermoacetica (Clostridium thermoaceticum), this protein is Ferredoxin.